The following is a 147-amino-acid chain: Large ribosomal subunit protein uL22c (147 aa).

It belongs to the universal ribosomal protein uL22 family. As to quaternary structure, part of the 50S ribosomal subunit.

The protein localises to the plastid. Functionally, this protein binds specifically to 23S rRNA. In terms of biological role, the globular domain of the protein is located near the polypeptide exit tunnel on the outside of the subunit, while an extended beta-hairpin is found that lines the wall of the exit tunnel in the center of the 70S ribosome. This chain is Large ribosomal subunit protein uL22c (rpl22), found in Cuscuta obtusiflora (Peruvian dodder).